The sequence spans 423 residues: Histidine--tRNA ligase (423 aa).

This sequence belongs to the class-II aminoacyl-tRNA synthetase family. Homodimer.

It localises to the cytoplasm. The enzyme catalyses tRNA(His) + L-histidine + ATP = L-histidyl-tRNA(His) + AMP + diphosphate + H(+). The chain is Histidine--tRNA ligase from Rhodococcus erythropolis (strain PR4 / NBRC 100887).